A 103-amino-acid chain; its full sequence is Large ribosomal subunit protein bL21 (103 aa).

Belongs to the bacterial ribosomal protein bL21 family. Part of the 50S ribosomal subunit. Contacts protein L20.

Functionally, this protein binds to 23S rRNA in the presence of protein L20. This Polaromonas naphthalenivorans (strain CJ2) protein is Large ribosomal subunit protein bL21.